Reading from the N-terminus, the 425-residue chain is Dipeptidase tcpJ (425 aa).

Zn(2+) contacts are provided by His46, Asp48, and Glu158. Substrate-binding residues include His185, Arg259, and Asp318.

It belongs to the metallo-dependent hydrolases superfamily. Peptidase M19 family. Zn(2+) serves as cofactor.

It catalyses the reaction an L-aminoacyl-L-amino acid + H2O = 2 an L-alpha-amino acid. In terms of biological role, dipeptidase; part of the gene cluster that mediates the biosynthesis of an unusual class of epipolythiodioxopiperazines (ETPs) lacking the reactive thiol group important for toxicity. Firstly, L-tyrosine is prenylated by tcpD, before undergoing condensation with L-glycine in a reaction catalyzed by the NRPS tcpP leading to the diketopiperazine (DKP) backbone. Afterwards the alpha-carbon of tyrosine is oxidized by the cytochrome P450 tcpC to form a hydroxyl group. However, in contrast other ETP biosynthesis pathways studied so far, tcpC is not able to bishydroxylate the DKP at both alpha-carbon positions, but hydroxylates the alpha-carbon of the tyrosine part and the nitrogen of the glycine part. The next steps involve an alpha,beta-elimination reaction catalyzed by tcpI, a methylation by the methyltransferase tcpN the action of the four enzyme cascade tcpG/K/J/I. Due to a dysfunctional cytochrome P450 monooxygenase tcpC, the pathway leads to the biosynthesis of probable non-toxic metabolites lacking the reactive thiol group. This chain is Dipeptidase tcpJ, found in Claviceps purpurea (strain 20.1) (Ergot fungus).